A 754-amino-acid chain; its full sequence is MTILTHTLGFPRVGLRRELKKAQESYWAGNSTREALLAVGRELRARHWEQQKQAGIDLLPVGDFAWYDHVLTTSLLLGNVPARHQNNDGSVDIDTLFRIGRGRAPTGEPAAAAEMTKWFNTNYHYIVPEFSKGQQFRLTWTQLLEEVDEALALGHKIKPVLLGPVTYLWLGKVKGEPFDRLTLLKDILPVYQHVLAELAKRGIEWVQIDEPALVLELPQAWLDAFKPAYDALAGQVKLLLTTYFEGVTPNLDTIIALPVQGLHVDLIHGKDDVAELHQRLPVDWLLSAGLINGRNVWRADLTEKYAQINAIVGKRALWVASSCSLLHSPIDLSVETRLDTEVKSWFAFALQKCGELALLRDALNSGETAALEEWSAPIQARRHSRRVHNAAVEKRLAAITAQDSQRENPYEVRAEAQRARFKLPAWPTTTIGSFPQTTEIRGLRLDFKKGNLDANNYRTGIAEHIKQAIIEQERLGLDVLVHGEAERNDMVEYFGEHLDGFVFTQNGWVQSYGSRCVKPPVVIGDISRPAPITVEWAKYAQSLTDKPVKGMLTGPVTILCWSFPREDVTRETIAKQIALALRDEVADLEAAGIGIIQIDEPALREGLPLRRSDWDAYLEWGVEAFRINAAVAKDETQIHTHMCYCEFNDIMDSIAALDADVITIETSRSDMELLESFEAFDYPNEIGPGVYDIHSPNVPSVEWIEALLKKAAQRIPAQRLWVNPDCGLKTRGWPETRAALANMVKAAHNLRQAK.

5-methyltetrahydropteroyltri-L-glutamate is bound by residues 17–20 and K117; that span reads RELK. L-homocysteine-binding positions include 431-433 and E484; that span reads IGS. Residues 431–433 and E484 each bind L-methionine; that span reads IGS. 5-methyltetrahydropteroyltri-L-glutamate-binding positions include 515-516 and W561; that span reads RC. D599 lines the L-homocysteine pocket. Residue D599 participates in L-methionine binding. A 5-methyltetrahydropteroyltri-L-glutamate-binding site is contributed by E605. Zn(2+)-binding residues include H641, C643, and E665. The active-site Proton donor is the H694. Residue C726 coordinates Zn(2+).

The protein belongs to the vitamin-B12 independent methionine synthase family. Zn(2+) serves as cofactor.

It carries out the reaction 5-methyltetrahydropteroyltri-L-glutamate + L-homocysteine = tetrahydropteroyltri-L-glutamate + L-methionine. Its pathway is amino-acid biosynthesis; L-methionine biosynthesis via de novo pathway; L-methionine from L-homocysteine (MetE route): step 1/1. Catalyzes the transfer of a methyl group from 5-methyltetrahydrofolate to homocysteine resulting in methionine formation. The chain is 5-methyltetrahydropteroyltriglutamate--homocysteine methyltransferase from Salmonella paratyphi B (strain ATCC BAA-1250 / SPB7).